We begin with the raw amino-acid sequence, 263 residues long: 5'-nucleotidase SurE (263 aa).

A divalent metal cation-binding residues include D8, D9, S40, and N93.

The protein belongs to the SurE nucleotidase family. A divalent metal cation serves as cofactor.

It is found in the cytoplasm. It catalyses the reaction a ribonucleoside 5'-phosphate + H2O = a ribonucleoside + phosphate. Functionally, nucleotidase that shows phosphatase activity on nucleoside 5'-monophosphates. This Beijerinckia indica subsp. indica (strain ATCC 9039 / DSM 1715 / NCIMB 8712) protein is 5'-nucleotidase SurE.